Consider the following 277-residue polypeptide: Undecaprenyl-diphosphatase (277 aa).

A run of 7 helical transmembrane segments spans residues 3-23 (IALLIKAAIMGVVEGLTEFLP), 44-64 (AKVFDIAIQTGAIFAVILVYW), 82-102 (QFALNVLVAFVPAVVLGLLFG), 109-129 (LFTPVVVASTFVIGGFIILWA), 188-208 (ATDFSFYLAIPTLIGAGVYSL), 218-238 (ADVPLFMVGLVFSFVSAWLCI), and 249-269 (SFIPFAWYRIAFGVVVLATAW).

This sequence belongs to the UppP family.

Its subcellular location is the cell inner membrane. The catalysed reaction is di-trans,octa-cis-undecaprenyl diphosphate + H2O = di-trans,octa-cis-undecaprenyl phosphate + phosphate + H(+). Catalyzes the dephosphorylation of undecaprenyl diphosphate (UPP). Confers resistance to bacitracin. This chain is Undecaprenyl-diphosphatase, found in Polaromonas sp. (strain JS666 / ATCC BAA-500).